A 105-amino-acid chain; its full sequence is Met repressor (105 aa).

This sequence belongs to the MetJ family. In terms of assembly, homodimer.

The protein localises to the cytoplasm. This regulatory protein, when combined with SAM (S-adenosylmethionine) represses the expression of the methionine regulon and of enzymes involved in SAM synthesis. The chain is Met repressor from Serratia proteamaculans (strain 568).